Reading from the N-terminus, the 524-residue chain is Thermosome subunit 3 (524 aa).

Belongs to the TCP-1 chaperonin family. As to quaternary structure, the thermosome or CCT complex is a oligomeric complex of two octameric double-ring structures; the complex is probably a heterooligomer of CCT1, CCT2 and CCT3 with yet unknown stoichiometry.

Molecular chaperone that assists in the folding or refolding of nascent or denatured proteins along with ATP hydrolysis. ATPase activity is highest in thermosome assemblies containing CCT1:CCT2, followed by assemblies containing CCT1:CCT2:CCT3. Not required for thermosome ATPase activity. Not required for growth. This chain is Thermosome subunit 3 (cct3), found in Haloferax volcanii (strain ATCC 29605 / DSM 3757 / JCM 8879 / NBRC 14742 / NCIMB 2012 / VKM B-1768 / DS2) (Halobacterium volcanii).